Reading from the N-terminus, the 257-residue chain is 1-(5-phosphoribosyl)-5-[(5-phosphoribosylamino)methylideneamino] imidazole-4-carboxamide isomerase (257 aa).

Asp8 serves as the catalytic Proton acceptor. Asp129 (proton donor) is an active-site residue.

Belongs to the HisA/HisF family.

The protein resides in the cytoplasm. It carries out the reaction 1-(5-phospho-beta-D-ribosyl)-5-[(5-phospho-beta-D-ribosylamino)methylideneamino]imidazole-4-carboxamide = 5-[(5-phospho-1-deoxy-D-ribulos-1-ylimino)methylamino]-1-(5-phospho-beta-D-ribosyl)imidazole-4-carboxamide. It participates in amino-acid biosynthesis; L-histidine biosynthesis; L-histidine from 5-phospho-alpha-D-ribose 1-diphosphate: step 4/9. The chain is 1-(5-phosphoribosyl)-5-[(5-phosphoribosylamino)methylideneamino] imidazole-4-carboxamide isomerase from Acaryochloris marina (strain MBIC 11017).